The following is a 122-amino-acid chain: Large ribosomal subunit protein uL14 (122 aa).

This sequence belongs to the universal ribosomal protein uL14 family. In terms of assembly, part of the 50S ribosomal subunit. Forms a cluster with proteins L3 and L19. In the 70S ribosome, L14 and L19 interact and together make contacts with the 16S rRNA in bridges B5 and B8.

Binds to 23S rRNA. Forms part of two intersubunit bridges in the 70S ribosome. In Rhizobium johnstonii (strain DSM 114642 / LMG 32736 / 3841) (Rhizobium leguminosarum bv. viciae), this protein is Large ribosomal subunit protein uL14.